A 364-amino-acid polypeptide reads, in one-letter code: Dimethylsulfoniopropionate demethylase DmdA (364 aa).

It belongs to the GcvT family. DmdA subfamily.

It carries out the reaction S,S-dimethyl-beta-propiothetin + (6S)-5,6,7,8-tetrahydrofolate = 3-(methylsulfanyl)propanoate + (6S)-5-methyl-5,6,7,8-tetrahydrofolate + H(+). In terms of biological role, involved in the assimilation of dimethylsulphoniopropionate (DMSP), an important compound in the fixation of carbon in marine phytoplankton, by mediating demethylation of dimethylsulfoniopropionate (DMSP) to methyl-mercaptopropionate (MMPA). The intracellular concentration of DMSP is estimated to be 70 mM. The polypeptide is Dimethylsulfoniopropionate demethylase DmdA (Ruegeria pomeroyi (strain ATCC 700808 / DSM 15171 / DSS-3) (Silicibacter pomeroyi)).